The chain runs to 224 residues: Thymidine kinase (224 aa).

ATP-binding positions include 19–26 (GPMFAGKT) and 93–96 (DEVQ). Glutamate 94 acts as the Proton acceptor in catalysis. The Zn(2+) site is built by cysteine 150, cysteine 153, cysteine 188, and histidine 191.

Belongs to the thymidine kinase family. In terms of assembly, homotetramer.

Its subcellular location is the cytoplasm. It catalyses the reaction thymidine + ATP = dTMP + ADP + H(+). This is Thymidine kinase from Mycoplasmoides gallisepticum (strain R(low / passage 15 / clone 2)) (Mycoplasma gallisepticum).